The sequence spans 670 residues: DNA ligase (670 aa).

NAD(+) contacts are provided by residues 32–36, 81–82, and Glu-113; these read DAEYD and SL. The active-site N6-AMP-lysine intermediate is Lys-115. NAD(+) contacts are provided by Arg-136, Glu-173, Lys-290, and Lys-314. Zn(2+) contacts are provided by Cys-408, Cys-411, Cys-426, and Cys-432. Positions 592–670 constitute a BRCT domain; sequence EIDSPFAGKT…EAEMIRLLGE (79 aa).

The protein belongs to the NAD-dependent DNA ligase family. LigA subfamily. Mg(2+) serves as cofactor. The cofactor is Mn(2+).

It catalyses the reaction NAD(+) + (deoxyribonucleotide)n-3'-hydroxyl + 5'-phospho-(deoxyribonucleotide)m = (deoxyribonucleotide)n+m + AMP + beta-nicotinamide D-nucleotide.. Its function is as follows. DNA ligase that catalyzes the formation of phosphodiester linkages between 5'-phosphoryl and 3'-hydroxyl groups in double-stranded DNA using NAD as a coenzyme and as the energy source for the reaction. It is essential for DNA replication and repair of damaged DNA. The sequence is that of DNA ligase from Yersinia pseudotuberculosis serotype O:1b (strain IP 31758).